A 307-amino-acid polypeptide reads, in one-letter code: Glutaminase (307 aa).

Substrate-binding residues include serine 66, asparagine 117, glutamate 161, asparagine 168, tyrosine 192, tyrosine 243, and valine 261.

The protein belongs to the glutaminase family. Homotetramer.

The catalysed reaction is L-glutamine + H2O = L-glutamate + NH4(+). The chain is Glutaminase from Serratia proteamaculans (strain 568).